The sequence spans 199 residues: Hematopoietic prostaglandin D synthase (199 aa).

A GST N-terminal domain is found at 2–79 (PNYKLLYFNM…YLTKNTDLAG (78 aa)). Residues Tyr-8, Arg-14, Trp-39, 49-51 (GKI), and 63-64 (QS) contribute to the glutathione site. Residues 81-199 (TALEQCQADA…WILKRPQTKL (119 aa)) enclose the GST C-terminal domain.

Belongs to the GST superfamily. Sigma family. As to quaternary structure, homodimer. The cofactor is glutathione. In terms of tissue distribution, expressed in skin and oviduct.

The protein localises to the cytoplasm. It carries out the reaction prostaglandin H2 = prostaglandin D2. It catalyses the reaction RX + glutathione = an S-substituted glutathione + a halide anion + H(+). The enzyme catalyses 2-glyceryl-prostaglandin H2 = 2-glyceryl-prostaglandin D2. In terms of biological role, bifunctional enzyme which catalyzes both the conversion of PGH2 to PGD2, a prostaglandin involved in smooth muscle contraction/relaxation and a potent inhibitor of platelet aggregation, and the conjugation of glutathione with a wide range of aryl halides and organic isothiocyanates. Also exhibits low glutathione-peroxidase activity. The sequence is that of Hematopoietic prostaglandin D synthase from Mus musculus (Mouse).